The primary structure comprises 803 residues: MKLIAIVGTNAKQSYNRILLQFMKRHFVQKADIDIMEIANVPMFNETEDQTDLPAIQNFNTKISQADGVIIATPEHNHTIPSSLNSLLEWLSFKVHPLDGKPLMIVGASYDVQGSSRAQLHLRQILDAPGVNAAVMPGSEFLLGRAHQAFDEAGNLKSEATVDFLESCFFKFLRFVQVANQLNEPEEVSFEAGTYQVTTQGHNGKLPMTVTLSEEKIEKIDIDSSGESSGIADIVFTRIPNEILEGQTLNVDAVSGASVTSNGVLDGVARAIKLAGGNPDVLRKRPKAPSALDKEDKTYSTDVVIVGGGGAGLAAAARVLQAGKQVMVLEKFPALGGNTVRSGGLLNAADPEWQKTFPANPGEAHNLSELIQTDEDSIAAEYLADFKELKQQVTNYLKDPSYLFDSNILHRIQTYIGGKRTDRNGCEVYGNYDLVKVLTDKDLDSVHWLADIGVDFDRSEVSMPVGALWRRSHKPKQPMGYAFIEALDTYIRKNSGTILTDTAVTDFILENGLIKGVLAKGRNGQTITVHAQAVVLASGGFGANTKMLQQYNTYWSNIDDNIQTTNSPAITGDGIRLGQSIGAALVGMGFSQMMPVSDPNTGAIFSGLQVPPANFVMVNQEGKRFVDEYGSRDTLSKAAIDNGGLFYLIADENIKATAMNTSNEKIEEQVAAGTLYRADTLESLAEQIGVDPATLVETINNYNSYVEAGYDPEFDKGAFDLKVEKAPFYATPRKPATHHTMGGLKIDTQAHVIKEDGNKIPSLYAAGEVTGGIHAGNRLGGNALADIFTFGRIAAETAVTECC.

FMN phosphoryl serine is present on Ser258. Residues Ala311, Glu330, Asn338, Thr339, Gly343, Gly344, and Asp573 each contribute to the FAD site. Arg632 functions as the Proton donor in the catalytic mechanism. Residues His739, Glu768, Ala783, and Leu784 each contribute to the FAD site.

The protein belongs to the FAD-dependent oxidoreductase 2 family. FRD/SDH subfamily. FAD is required as a cofactor. It depends on FMN as a cofactor.

The catalysed reaction is dihydrourocanate + A = urocanate + AH2. Its function is as follows. Catalyzes the two-electron reduction of urocanate to dihydrourocanate (also named imidazole propionate or deamino-histidine). Dihydrourocanate is present at higher concentrations in subjects with type 2 diabetes, and directly impairs glucose tolerance and insulin signaling at the level of insulin receptor substrate (IRS) through activation of p38 gamma (MAPK12)-p62-mTORC1. Therefore, the UrdA enzyme from the gut bacteria S.mutans strain UA159 may contribute to the pathogenesis of type 2 diabetes by producing the microbial metabolite dihydrourocanate. In Streptococcus mutans serotype c (strain ATCC 700610 / UA159), this protein is Urocanate reductase.